Here is a 495-residue protein sequence, read N- to C-terminus: NADH-ubiquinone oxidoreductase chain 4 (495 aa).

Transmembrane regions (helical) follow at residues 9 to 29, 37 to 57, 89 to 109, 118 to 138, 139 to 159, 173 to 193, 214 to 234, 245 to 265, 272 to 292, 307 to 327, 335 to 355, 367 to 387, 413 to 433, and 457 to 477; these read YSNLSGLILLPLLGSLIILVI, IRGITIWTSLITFLYSLFFWI, ISLFFVILTTFLTPICILVGF, EYMIAFFICESFLIAVFCSLD, LLIFYVFFESVLIPMFIIIGV, FFLYTLMGSLFMLLAILFIFF, ILLWIAFFASFSVKVPMVPVH, PTAGSVILAGILLKLGTYGFL, FPEATLYFTPFIYTLSVIAII, IIAYSSVAHMNFVTIGMFSLN, ILLMLSHGLVSSALFLCVGAL, YGGLVSTMPIFSTIFLFFTLA, LVATLAALGMILGAAYSLWLY, and VLIFLPFIVGVIWMGVYPEVF.

Belongs to the complex I subunit 4 family.

The protein localises to the mitochondrion membrane. The enzyme catalyses a ubiquinone + NADH + 5 H(+)(in) = a ubiquinol + NAD(+) + 4 H(+)(out). Core subunit of the mitochondrial membrane respiratory chain NADH dehydrogenase (Complex I) that is believed to belong to the minimal assembly required for catalysis. Complex I functions in the transfer of electrons from NADH to the respiratory chain. The immediate electron acceptor for the enzyme is believed to be ubiquinone. In Marchantia polymorpha (Common liverwort), this protein is NADH-ubiquinone oxidoreductase chain 4 (ND4).